We begin with the raw amino-acid sequence, 265 residues long: Phosphate import ATP-binding protein PstB 2 (265 aa).

In terms of domain architecture, ABC transporter spans 13 to 260; it reads FRTENLNVYY…PTKQATRDYV (248 aa). 45-52 lines the ATP pocket; the sequence is GPSGCGKS.

This sequence belongs to the ABC transporter superfamily. Phosphate importer (TC 3.A.1.7) family. The complex is composed of two ATP-binding proteins (PstB), two transmembrane proteins (PstC and PstA) and a solute-binding protein (PstS).

It is found in the cell inner membrane. The enzyme catalyses phosphate(out) + ATP + H2O = ADP + 2 phosphate(in) + H(+). In terms of biological role, part of the ABC transporter complex PstSACB involved in phosphate import. Responsible for energy coupling to the transport system. This is Phosphate import ATP-binding protein PstB 2 from Synechococcus sp. (strain JA-3-3Ab) (Cyanobacteria bacterium Yellowstone A-Prime).